Reading from the N-terminus, the 160-residue chain is Cytochrome b6-f complex subunit 4 (160 aa).

4 consecutive transmembrane segments (helical) span residues 36–56, 68–88, 95–115, and 131–151; these read LLYI…GLAV, PFAT…FQIL, FFGV…PFLE, and SVFL…VLPI.

This sequence belongs to the cytochrome b family. PetD subfamily. In terms of assembly, the 4 large subunits of the cytochrome b6-f complex are cytochrome b6, subunit IV (17 kDa polypeptide, petD), cytochrome f and the Rieske protein, while the 4 small subunits are petG, petL, petM and petN. The complex functions as a dimer.

Its subcellular location is the plastid. The protein resides in the chloroplast thylakoid membrane. Its function is as follows. Component of the cytochrome b6-f complex, which mediates electron transfer between photosystem II (PSII) and photosystem I (PSI), cyclic electron flow around PSI, and state transitions. The sequence is that of Cytochrome b6-f complex subunit 4 from Welwitschia mirabilis (Tree tumbo).